The sequence spans 145 residues: uncharacterized protein (145 aa).

2 disordered regions span residues 1 to 41 (MRRL…PPGT) and 122 to 145 (RLPS…PLAL). Positions 20 to 34 (GGPQNGTSGCTTAPQ) are enriched in polar residues. Basic and acidic residues predominate over residues 134–145 (DSQHPREVPLAL).

As to expression, ubiquitous.

This is an uncharacterized protein from Homo sapiens (Human).